A 126-amino-acid chain; its full sequence is Large ribosomal subunit protein bL19 (126 aa).

The protein belongs to the bacterial ribosomal protein bL19 family.

In terms of biological role, this protein is located at the 30S-50S ribosomal subunit interface and may play a role in the structure and function of the aminoacyl-tRNA binding site. The polypeptide is Large ribosomal subunit protein bL19 (Dechloromonas aromatica (strain RCB)).